The sequence spans 266 residues: 2-C-methyl-D-erythritol 4-phosphate cytidylyltransferase (266 aa).

The segment at 229–266 (NRDCGPGTRDPESAHPQSSVSASAFSGPGSRAPGPEEI) is disordered. A compositionally biased stretch (polar residues) spans 243-252 (HPQSSVSASA).

This sequence belongs to the IspD/TarI cytidylyltransferase family. IspD subfamily.

It catalyses the reaction 2-C-methyl-D-erythritol 4-phosphate + CTP + H(+) = 4-CDP-2-C-methyl-D-erythritol + diphosphate. It participates in isoprenoid biosynthesis; isopentenyl diphosphate biosynthesis via DXP pathway; isopentenyl diphosphate from 1-deoxy-D-xylulose 5-phosphate: step 2/6. Catalyzes the formation of 4-diphosphocytidyl-2-C-methyl-D-erythritol from CTP and 2-C-methyl-D-erythritol 4-phosphate (MEP). This chain is 2-C-methyl-D-erythritol 4-phosphate cytidylyltransferase, found in Xanthomonas axonopodis pv. citri (strain 306).